A 446-amino-acid chain; its full sequence is Tubulin beta chain (446 aa).

8 residues coordinate GTP: Gln-11, Glu-69, Ser-138, Gly-142, Thr-143, Gly-144, Asn-204, and Asn-226. Residue Glu-69 coordinates Mg(2+). A disordered region spans residues 423-446 (QQYQDAGVDEEEEEYEEEPLPEDE). Residues 429-446 (GVDEEEEEYEEEPLPEDE) are compositionally biased toward acidic residues.

Belongs to the tubulin family. In terms of assembly, dimer of alpha and beta chains. A typical microtubule is a hollow water-filled tube with an outer diameter of 25 nm and an inner diameter of 15 nM. Alpha-beta heterodimers associate head-to-tail to form protofilaments running lengthwise along the microtubule wall with the beta-tubulin subunit facing the microtubule plus end conferring a structural polarity. Microtubules usually have 13 protofilaments but different protofilament numbers can be found in some organisms and specialized cells. Requires Mg(2+) as cofactor.

It is found in the cytoplasm. Its subcellular location is the cytoskeleton. Functionally, tubulin is the major constituent of microtubules, a cylinder consisting of laterally associated linear protofilaments composed of alpha- and beta-tubulin heterodimers. Microtubules grow by the addition of GTP-tubulin dimers to the microtubule end, where a stabilizing cap forms. Below the cap, tubulin dimers are in GDP-bound state, owing to GTPase activity of alpha-tubulin. This Pestalotiopsis microspora protein is Tubulin beta chain (TUBB).